The following is a 245-amino-acid chain: 8-amino-3,8-dideoxy-manno-octulosonate cytidylyltransferase (245 aa).

It belongs to the KdsB family.

The protein resides in the cytoplasm. It catalyses the reaction 8-amino-3,8-dideoxy-alpha-D-manno-octulosonate + CTP = CMP-8-amino-3,8-dideoxy-alpha-D-manno-oct-2-ulosonate + diphosphate. The protein operates within bacterial outer membrane biogenesis; lipopolysaccharide biosynthesis. Activates KDO8N (a required 8-carbon sugar) for incorporation into bacterial lipopolysaccharide in the Shewanella genus. The polypeptide is 8-amino-3,8-dideoxy-manno-octulosonate cytidylyltransferase (Shewanella sp. (strain W3-18-1)).